The following is a 123-amino-acid chain: Ragulator complex protein LAMTOR3-B (123 aa).

This sequence belongs to the LAMTOR3 family. Part of the Ragulator complex composed of lamtor1, lamtor2, lamtor3, lamtor4 and lamtor5. The Ragulator complex interacts with slc38a9; the probable amino acid sensor. Component of the lysosomal folliculin complex (LFC).

It is found in the late endosome membrane. In terms of biological role, as part of the Ragulator complex it is involved in amino acid sensing and activation of mTORC1, a signaling complex promoting cell growth in response to growth factors, energy levels, and amino acids. Activated by amino acids through a mechanism involving the lysosomal V-ATPase, the Ragulator plays a dual role for the small GTPases Rag (RagA/RRAGA, RagB/RRAGB, RagC/RRAGC and/or RagD/RRAGD): it (1) acts as a guanine nucleotide exchange factor (GEF), activating the small GTPases Rag and (2) mediates recruitment of Rag GTPases to the lysosome membrane. Activated Ragulator and Rag GTPases function as a scaffold recruiting mTORC1 to lysosomes where it is in turn activated. In Xenopus laevis (African clawed frog), this protein is Ragulator complex protein LAMTOR3-B (lamtor3-b).